The primary structure comprises 169 residues: uncharacterized protein (169 aa).

The next 2 membrane-spanning stretches (helical) occupy residues 62 to 84 (RWGF…LLGL) and 94 to 116 (ALML…YWWF).

It is found in the cell membrane. This is an uncharacterized protein from Archaeoglobus fulgidus (strain ATCC 49558 / DSM 4304 / JCM 9628 / NBRC 100126 / VC-16).